Here is a 454-residue protein sequence, read N- to C-terminus: UDP-N-acetylmuramate--L-alanine ligase (454 aa).

109-115 (GTHGKTT) is an ATP binding site.

This sequence belongs to the MurCDEF family.

The protein localises to the cytoplasm. It carries out the reaction UDP-N-acetyl-alpha-D-muramate + L-alanine + ATP = UDP-N-acetyl-alpha-D-muramoyl-L-alanine + ADP + phosphate + H(+). The protein operates within cell wall biogenesis; peptidoglycan biosynthesis. In terms of biological role, cell wall formation. The sequence is that of UDP-N-acetylmuramate--L-alanine ligase from Protochlamydia amoebophila (strain UWE25).